Here is a 460-residue protein sequence, read N- to C-terminus: Inner membrane symporter YicJ (460 aa).

Topologically, residues 1 to 11 (MKSEVLSVKEK) are periplasmic. 2 consecutive transmembrane segments (helical) span residues 12–32 (IGYGMGDAASHIIFDNVMLYM) and 33–53 (MFFYTDIFGIPAGFVGTMFLV). At 54–80 (ARALDAISDPCMGLLADRTRSRWGKFR) the chain is on the periplasmic side. Residues 81-101 (PWVLFGALPFGIVCVLAYSTP) traverse the membrane as a helical segment. Residues 102–116 (DLSMNGKMIYAAITY) are Cytoplasmic-facing. A helical membrane pass occupies residues 117 to 137 (TLLTLLYTVVNIPYCALGGVI). Residues 138–152 (TNDPTQRISLQSWRF) are Periplasmic-facing. The helical transmembrane segment at 153 to 173 (VLATAGGMLSTVLMMPLVNLI) threads the bilayer. The Cytoplasmic segment spans residues 174-181 (GGDNKPLG). Residues 182–202 (FQGGIAVLSVVAFMMLAFCFF) traverse the membrane as a helical segment. The Periplasmic segment spans residues 203–248 (TTKERVEAPPTTTSMREDLRDIWQNDQWRIVGLLTIFNILAVCVRG). The chain crosses the membrane as a helical span at residues 249–269 (GAMMYYVTWILGTPEVFVAFL). At 270 to 288 (TTYCVGNLIGSALAKPLTD) the chain is on the cytoplasmic side. The chain crosses the membrane as a helical span at residues 289 to 309 (WKCKVTIFWWTNALLAVISLA). Met310 is a topological domain (periplasmic). A helical membrane pass occupies residues 311–331 (FFVPMQASITMFVFIFVIGVL). Residues 332–366 (HQLVTPIQWVMMSDTVDYGEWCNGKRLTGISFAGT) lie on the Cytoplasmic side of the membrane. A helical membrane pass occupies residues 367–387 (LFVLKLGLAFGGALIGWMLAY). The Periplasmic segment spans residues 388–403 (GGYDAAEKAQNSATIS). A helical membrane pass occupies residues 404-424 (IIIALFTIVPAICYLLSAIIA). At 425-460 (KRYYSLTTHNLKTVMEQLAQGKRRCQQQFTSQEVQN) the chain is on the cytoplasmic side.

It belongs to the sodium:galactoside symporter (TC 2.A.2) family.

It is found in the cell inner membrane. This Escherichia coli (strain K12) protein is Inner membrane symporter YicJ (yicJ).